The primary structure comprises 312 residues: Malate dehydrogenase (312 aa).

Residues glycine 7 to glycine 13 and aspartate 34 contribute to the NAD(+) site. Substrate contacts are provided by arginine 81 and arginine 87. NAD(+) is bound by residues asparagine 94 and isoleucine 117–asparagine 119. The substrate site is built by asparagine 119 and arginine 153. Histidine 177 serves as the catalytic Proton acceptor. Methionine 227 is a binding site for NAD(+).

It belongs to the LDH/MDH superfamily. MDH type 1 family. Homodimer.

It catalyses the reaction (S)-malate + NAD(+) = oxaloacetate + NADH + H(+). Its function is as follows. Catalyzes the reversible oxidation of malate to oxaloacetate. In Cronobacter sakazakii (strain ATCC BAA-894) (Enterobacter sakazakii), this protein is Malate dehydrogenase.